Consider the following 138-residue polypeptide: Acidic phospholipase A2 Tbo-E6 (138 aa).

The N-terminal stretch at Met1–Gly16 is a signal peptide. Intrachain disulfides connect Cys42–Cys131, Cys44–Cys60, Cys59–Cys111, Cys65–Cys138, Cys66–Cys104, Cys73–Cys97, and Cys91–Cys102. Residues Tyr43, Gly45, and Gly47 each contribute to the Ca(2+) site. Residue His63 is part of the active site. Asp64 is a Ca(2+) binding site. The active site involves Asp105.

In terms of assembly, monomer. Ca(2+) is required as a cofactor. In terms of tissue distribution, expressed by the venom gland.

The protein localises to the secreted. The catalysed reaction is a 1,2-diacyl-sn-glycero-3-phosphocholine + H2O = a 1-acyl-sn-glycero-3-phosphocholine + a fatty acid + H(+). Its function is as follows. Snake venom phospholipase A2 (PLA2) that impairs hemostasis. It weakly inhibits ADP-induced platelet aggregation when tested on platelet rich plasma from human and rabbit blood (15-25% of inhibition at 5-10 ug of enzyme), and dose-dependently inhibits blood coagulation, possibly by inhibiting thrombin activation. Exhibits high hydrolytic activities toward L-dipalmitoyl phosphatidylcholine. PLA2 catalyzes the calcium-dependent hydrolysis of the 2-acyl groups in 3-sn-phosphoglycerides. The protein is Acidic phospholipase A2 Tbo-E6 of Craspedocephalus borneensis (Borneo pit viper).